We begin with the raw amino-acid sequence, 168 residues long: DOMON domain-containing protein CBG21753 (168 aa).

The N-terminal stretch at 1-17 is a signal peptide; sequence MIKSMILVALILAFASA. Residues 25–143 enclose the DOMON domain; that stretch reads SGFQSYWRFA…CQKWRWIKSG (119 aa). Asparagine 35 and asparagine 94 each carry an N-linked (GlcNAc...) asparagine glycan. Residues 148–168 form a disordered region; that stretch reads GQLTRNSKSPKDKKVCPMECN. Residues 156 to 168 are compositionally biased toward basic and acidic residues; it reads SPKDKKVCPMECN.

It localises to the secreted. The polypeptide is DOMON domain-containing protein CBG21753 (Caenorhabditis briggsae).